The chain runs to 156 residues: Small ribosomal subunit protein uS7 (156 aa).

Belongs to the universal ribosomal protein uS7 family. In terms of assembly, part of the 30S ribosomal subunit. Contacts proteins S9 and S11.

Functionally, one of the primary rRNA binding proteins, it binds directly to 16S rRNA where it nucleates assembly of the head domain of the 30S subunit. Is located at the subunit interface close to the decoding center, probably blocks exit of the E-site tRNA. The sequence is that of Small ribosomal subunit protein uS7 from Nitratidesulfovibrio vulgaris (strain ATCC 29579 / DSM 644 / CCUG 34227 / NCIMB 8303 / VKM B-1760 / Hildenborough) (Desulfovibrio vulgaris).